Here is a 435-residue protein sequence, read N- to C-terminus: Serine carboxypeptidase-like 16 (435 aa).

Residues 1-23 form the signal peptide; sequence MGSWIPKLLLLQLVLLLTKHADS. Intrachain disulfides connect Cys82–Cys325, Cys246–Cys260, and Cys284–Cys291. N-linked (GlcNAc...) asparagine glycosylation is present at Asn103. Residue Ser178 is part of the active site. An N-linked (GlcNAc...) asparagine glycan is attached at Asn305. The active site involves Asp360. Asn376 is a glycosylation site (N-linked (GlcNAc...) asparagine). The active site involves His413.

Belongs to the peptidase S10 family. In terms of tissue distribution, expressed in seedlings, roots and leaves.

The protein resides in the secreted. Probable carboxypeptidase. In Arabidopsis thaliana (Mouse-ear cress), this protein is Serine carboxypeptidase-like 16 (SCPL16).